The primary structure comprises 830 residues: Vacuolar protein sorting-associated protein 11 homolog (830 aa).

The RING-type; atypical zinc finger occupies Cys-733–Lys-775.

It belongs to the VPS11 family. In terms of assembly, part of the homotypic fusion and vacuole protein sorting (HOPS) complex, composed of Vps16A, car/Vps33A, dor/Vps18, Vps39, Vps11 and lt/Vps41. Unlike in other species, not part of the class C core vacuole/endosome tethering (CORVET) complex.

The protein localises to the late endosome membrane. The protein resides in the lysosome membrane. In terms of biological role, part of the homotypic fusion and vacuole protein sorting (HOPS) tethering complex involved in endo-lysosomal vesicle trafficking and lysosome biogenesis, but unlike in many other species does not form part of the class C core vacuole/endosome tethering (CORVET) complex. The HOPS complex facilitates docking and fusion of lysosomes with late endosomes and several other types of vesicles. The HOPS complex is also involved in autophagy, pigment granule biogenesis and crinophagy (the elimination of unused secretory granules through fusion with lysosomes). The HOPS complex probably instigates autophagosome-lysosome fusion by binding autophagosome-associated Syx17/syntaxin 17 and promoting assembly of the trans-SNARE complex. Independent of Syx17/syntaxin 17, HOPS is involved in biosynthetic transport to lysosomes and lysosome-related organelles such as eye-pigment granules. Required for autophagocytosis-dependent remodeling of myofibrils and transverse-tubules (T-tubules) during metamorphosis. In Drosophila melanogaster (Fruit fly), this protein is Vacuolar protein sorting-associated protein 11 homolog.